Consider the following 336-residue polypeptide: Formimidoylglutamase (336 aa).

Residues histidine 129, aspartate 160, histidine 162, aspartate 164, aspartate 257, and aspartate 259 each coordinate Mn(2+).

It belongs to the arginase family. Requires Mn(2+) as cofactor.

The catalysed reaction is N-formimidoyl-L-glutamate + H2O = formamide + L-glutamate. It participates in amino-acid degradation; L-histidine degradation into L-glutamate; L-glutamate from N-formimidoyl-L-glutamate (hydrolase route): step 1/1. Catalyzes the conversion of N-formimidoyl-L-glutamate to L-glutamate and formamide. This Vibrio vulnificus (strain YJ016) protein is Formimidoylglutamase.